Reading from the N-terminus, the 108-residue chain is Small ribosomal subunit protein uS17 (108 aa).

The protein belongs to the universal ribosomal protein uS17 family. As to quaternary structure, part of the 30S ribosomal subunit.

One of the primary rRNA binding proteins, it binds specifically to the 5'-end of 16S ribosomal RNA. This chain is Small ribosomal subunit protein uS17, found in Methanoculleus marisnigri (strain ATCC 35101 / DSM 1498 / JR1).